The following is a 194-amino-acid chain: Probable calcium-binding protein CML45 (194 aa).

A compositionally biased stretch (basic and acidic residues) spans 52-63 (NNKDQQETLTKQ). Residues 52 to 81 (NNKDQQETLTKQEDDDDDDDDDDDDDDDDI) form a disordered region. Over residues 64–81 (EDDDDDDDDDDDDDDDDI) the composition is skewed to acidic residues. 3 EF-hand domains span residues 76–98 (DDDD…LGLF), 122–157 (ASLE…LGFK), and 160–194 (SYLD…TSFY). Ca(2+)-binding residues include Asp-135, Asn-137, Asp-139, Glu-146, Asp-173, Asn-175, Asp-177, Lys-179, and Glu-184.

Potential calcium sensor. This is Probable calcium-binding protein CML45 from Arabidopsis thaliana (Mouse-ear cress).